Here is a 245-residue protein sequence, read N- to C-terminus: Orotidine 5'-phosphate decarboxylase (245 aa).

Residues Asp22, Lys44, 71 to 80, Thr131, Arg192, Gln201, Gly221, and Arg222 each bind substrate; that span reads DLKFHDIPNT. Catalysis depends on Lys73, which acts as the Proton donor.

Belongs to the OMP decarboxylase family. Type 1 subfamily. As to quaternary structure, homodimer.

The enzyme catalyses orotidine 5'-phosphate + H(+) = UMP + CO2. It participates in pyrimidine metabolism; UMP biosynthesis via de novo pathway; UMP from orotate: step 2/2. In terms of biological role, catalyzes the decarboxylation of orotidine 5'-monophosphate (OMP) to uridine 5'-monophosphate (UMP). In Yersinia pestis bv. Antiqua (strain Antiqua), this protein is Orotidine 5'-phosphate decarboxylase.